Consider the following 256-residue polypeptide: Reaction center protein M chain (256 aa).

3 consecutive transmembrane segments (helical) span residues 52 to 78 (PGVA…LASV), 110 to 139 (EGGW…ARAL), and 142 to 167 (GTHM…PLLL). The (7R,8Z)-bacteriochlorophyll b site is built by H181 and H201. Residues 197-225 (YNPFHMLSIAFLYGSAVLFAMHGATILAV) form a helical membrane-spanning segment. Residues H218 and E233 each coordinate Fe cation. W251 is a binding site for a ubiquinone.

Belongs to the reaction center PufL/M/PsbA/D family. In terms of assembly, reaction center is composed of four bacteriochlorophylls, two bacteriopheophytins, two ubiquinones, one iron, and two highly hydrophobic polypeptide chains (designated L and M).

It is found in the cellular chromatophore membrane. In terms of biological role, the reaction center is a membrane-bound complex that mediates the initial photochemical event in the electron transfer process of photosynthesis. The chain is Reaction center protein M chain (pufM) from Pararhodospirillum photometricum (Rhodospirillum photometricum).